The chain runs to 33 residues: Photosystem II reaction center protein Psb30 (33 aa).

The chain crosses the membrane as a helical span at residues 5-25 (VIAQPIVLGLIVASGPLVIVS).

It belongs to the Psb30/Ycf12 family. In terms of assembly, PSII is composed of 1 copy each of membrane proteins PsbA, PsbB, PsbC, PsbD, PsbE, PsbF, PsbH, PsbI, PsbJ, PsbK, PsbL, PsbM, PsbT, PsbX, PsbY, PsbZ, Psb30/Ycf12, peripheral proteins of the oxygen-evolving complex and a large number of cofactors. It forms dimeric complexes.

It localises to the plastid membrane. A core subunit of photosystem II (PSII), probably helps stabilize the reaction center. The chain is Photosystem II reaction center protein Psb30 from Aneura mirabilis (Parasitic liverwort).